The following is a 413-amino-acid chain: Serine hydroxymethyltransferase (413 aa).

(6S)-5,6,7,8-tetrahydrofolate is bound by residues leucine 117 and 121 to 123 (GHL). Lysine 226 carries the N6-(pyridoxal phosphate)lysine modification. (6S)-5,6,7,8-tetrahydrofolate is bound by residues glutamate 241 and 349–351 (SPF).

The protein belongs to the SHMT family. Homodimer. It depends on pyridoxal 5'-phosphate as a cofactor.

It localises to the cytoplasm. It carries out the reaction (6R)-5,10-methylene-5,6,7,8-tetrahydrofolate + glycine + H2O = (6S)-5,6,7,8-tetrahydrofolate + L-serine. It participates in one-carbon metabolism; tetrahydrofolate interconversion. The protein operates within amino-acid biosynthesis; glycine biosynthesis; glycine from L-serine: step 1/1. Its function is as follows. Catalyzes the reversible interconversion of serine and glycine with tetrahydrofolate (THF) serving as the one-carbon carrier. This reaction serves as the major source of one-carbon groups required for the biosynthesis of purines, thymidylate, methionine, and other important biomolecules. Also exhibits THF-independent aldolase activity toward beta-hydroxyamino acids, producing glycine and aldehydes, via a retro-aldol mechanism. The chain is Serine hydroxymethyltransferase from Halalkalibacterium halodurans (strain ATCC BAA-125 / DSM 18197 / FERM 7344 / JCM 9153 / C-125) (Bacillus halodurans).